The sequence spans 359 residues: Molybdenum import ATP-binding protein ModC (359 aa).

The ABC transporter domain maps to 1–233; it reads MSGLTVSIRG…IDAESEGGGV (233 aa). 32 to 39 is an ATP binding site; sequence GHSGAGKT. The region spanning 289 to 355 is the Mop domain; that stretch reads AISIRNLLPV…VKAVSVDRAA (67 aa).

The protein belongs to the ABC transporter superfamily. Molybdate importer (TC 3.A.1.8) family. In terms of assembly, the complex is composed of two ATP-binding proteins (ModC), two transmembrane proteins (ModB) and a solute-binding protein (ModA).

It localises to the cell inner membrane. It carries out the reaction molybdate(out) + ATP + H2O = molybdate(in) + ADP + phosphate + H(+). Functionally, part of the ABC transporter complex ModABC involved in molybdenum import. Responsible for energy coupling to the transport system. This is Molybdenum import ATP-binding protein ModC from Brucella melitensis biotype 1 (strain ATCC 23456 / CCUG 17765 / NCTC 10094 / 16M).